The following is a 479-amino-acid chain: Flap endonuclease 1 (479 aa).

The tract at residues 1 to 106 (MGIKGLTKFI…SELEKRGEKR (106 aa)) is N-domain. Mg(2+) is bound at residue D34. 2 residues coordinate DNA: R47 and R72. Mg(2+) is bound by residues D88, E160, E162, D181, and D183. The tract at residues 124–266 (EIKKQSGRTV…KTAYNLIKEY (143 aa)) is I-domain. Residue E160 participates in DNA binding. DNA-binding residues include G244 and D246. Residue D246 participates in Mg(2+) binding. The segment at 349-357 (TQRRLDTFF) is interaction with PCNA. The disordered stretch occupies residues 379–455 (AKGKGKKREL…NSDSGNIKNE (77 aa)). Residues 403–428 (NIKDEKKNTDKMDELKNKSDENFVKD) show a composition bias toward basic and acidic residues.

Belongs to the XPG/RAD2 endonuclease family. FEN1 subfamily. In terms of assembly, interacts with PCNA. Three molecules of FEN1 bind to one PCNA trimer with each molecule binding to one PCNA monomer. PCNA stimulates the nuclease activity without altering cleavage specificity. The cofactor is Mg(2+). Phosphorylated. Phosphorylation upon DNA damage induces relocalization to the nuclear plasma.

It is found in the nucleus. The protein localises to the nucleolus. The protein resides in the nucleoplasm. Its subcellular location is the mitochondrion. Structure-specific nuclease with 5'-flap endonuclease and 5'-3' exonuclease activities involved in DNA replication and repair. During DNA replication, cleaves the 5'-overhanging flap structure that is generated by displacement synthesis when DNA polymerase encounters the 5'-end of a downstream Okazaki fragment. It enters the flap from the 5'-end and then tracks to cleave the flap base, leaving a nick for ligation. Also involved in the long patch base excision repair (LP-BER) pathway, by cleaving within the apurinic/apyrimidinic (AP) site-terminated flap. Acts as a genome stabilization factor that prevents flaps from equilibrating into structures that lead to duplications and deletions. Also possesses 5'-3' exonuclease activity on nicked or gapped double-stranded DNA, and exhibits RNase H activity. Also involved in replication and repair of rDNA and in repairing mitochondrial DNA. The protein is Flap endonuclease 1 of Plasmodium chabaudi chabaudi.